The sequence spans 396 residues: Corticosteroid-binding globulin (396 aa).

Positions 1-22 (MSLALYTCLLWLCTSGLWTAQA) are cleaved as a signal peptide. Residues asparagine 88 and asparagine 216 are each glycosylated (N-linked (GlcNAc...) asparagine). Cortisol is bound at residue glutamine 246. N-linked (GlcNAc...) asparagine glycosylation is present at asparagine 252. Aspartate 278 contributes to the cortisol binding site. 2 N-linked (GlcNAc...) asparagine glycosylation sites follow: asparagine 319 and asparagine 352. Position 384 (tryptophan 384) interacts with cortisol.

This sequence belongs to the serpin family. Expressed by the liver; secreted in plasma.

The protein localises to the secreted. Its function is as follows. Major transport protein for glucocorticoids and progestins in the blood of almost all vertebrate species. This Rattus norvegicus (Rat) protein is Corticosteroid-binding globulin (Serpina6).